The sequence spans 157 residues: Beta-defensin 125 (157 aa).

An N-terminal signal peptide occupies residues 1–20 (MNILMLTFIICGLLTQVTKG). 3 disulfides stabilise this stretch: Cys-27/Cys-55, Cys-35/Cys-49, and Cys-39/Cys-56. The disordered stretch occupies residues 109-157 (GETMTPETNTPETTMPPPETTTPETTMPPSETATSETMPPPSQRALTHN). 2 stretches are compositionally biased toward low complexity: residues 110–121 (ETMTPETNTPET) and 129–145 (TTPETTMPPSETATSET).

This sequence belongs to the beta-defensin family.

It is found in the secreted. In terms of biological role, has antibacterial activity. The chain is Beta-defensin 125 (DEFB125) from Pan troglodytes (Chimpanzee).